The chain runs to 22 residues: Cytin chain B (22 aa).

The protein belongs to the protease inhibitor I13 (potato type I serine protease inhibitor) family. Heterodimer of an A chain and a B chain, linked by a disulfide bond.

Its function is as follows. Inhibitor of chymotrypsin. This Theromyzon tessulatum (Duck leech) protein is Cytin chain B.